A 365-amino-acid polypeptide reads, in one-letter code: Probable caffeine synthase 2 (365 aa).

Tyrosine 19 serves as a coordination point for S-adenosyl-L-homocysteine. Residue threonine 26 participates in caffeine binding. S-adenosyl-L-homocysteine contacts are provided by cysteine 62, aspartate 99, leucine 100, serine 134, and phenylalanine 135. Residues tyrosine 152, histidine 155, and tryptophan 156 each coordinate caffeine. Asparagine 173 serves as a coordination point for Mg(2+). Arginine 221 is a binding site for caffeine. Positions 259, 261, and 262 each coordinate Mg(2+). Phenylalanine 317 is a caffeine binding site.

Belongs to the methyltransferase superfamily. Type-7 methyltransferase family. The cofactor is Mg(2+).

The catalysed reaction is 7-methylxanthine + S-adenosyl-L-methionine = theobromine + S-adenosyl-L-homocysteine + H(+). It carries out the reaction theobromine + S-adenosyl-L-methionine = caffeine + S-adenosyl-L-homocysteine + H(+). It catalyses the reaction 1,7-dimethylxanthine + S-adenosyl-L-methionine = caffeine + S-adenosyl-L-homocysteine + H(+). It functions in the pathway alkaloid biosynthesis. Its function is as follows. May be involved in the biosynthesis of caffeine. Catalyzes the conversion of 7-methylxanthine (7mX) to theobromine and of theobromine to caffeine. Has 1-N-methylation activity. This chain is Probable caffeine synthase 2, found in Camellia sinensis (Tea plant).